Here is a 78-residue protein sequence, read N- to C-terminus: Acyl carrier protein (78 aa).

One can recognise a Carrier domain in the interval 1-76; it reads MSLEDDVKLI…DVITYIKTRQ (76 aa). Residue serine 36 is modified to O-(pantetheine 4'-phosphoryl)serine.

The protein belongs to the acyl carrier protein (ACP) family. Post-translationally, 4'-phosphopantetheine is transferred from CoA to a specific serine of apo-ACP by AcpS. This modification is essential for activity because fatty acids are bound in thioester linkage to the sulfhydryl of the prosthetic group.

It is found in the cytoplasm. Its pathway is lipid metabolism; fatty acid biosynthesis. Carrier of the growing fatty acid chain in fatty acid biosynthesis. This Chlamydia felis (strain Fe/C-56) (Chlamydophila felis) protein is Acyl carrier protein.